A 103-amino-acid chain; its full sequence is uncharacterized protein (103 aa).

This is an uncharacterized protein from Enterobacteria phage T4 (Bacteriophage T4).